We begin with the raw amino-acid sequence, 385 residues long: UDP-N-acetylglucosamine--N-acetylmuramyl-(pentapeptide) pyrophosphoryl-undecaprenol N-acetylglucosamine transferase (385 aa).

Residues 11 to 13 (TGG), N117, R160, S215, and Q317 each bind UDP-N-acetyl-alpha-D-glucosamine.

Belongs to the glycosyltransferase 28 family. MurG subfamily.

It localises to the cell inner membrane. It catalyses the reaction di-trans,octa-cis-undecaprenyl diphospho-N-acetyl-alpha-D-muramoyl-L-alanyl-D-glutamyl-meso-2,6-diaminopimeloyl-D-alanyl-D-alanine + UDP-N-acetyl-alpha-D-glucosamine = di-trans,octa-cis-undecaprenyl diphospho-[N-acetyl-alpha-D-glucosaminyl-(1-&gt;4)]-N-acetyl-alpha-D-muramoyl-L-alanyl-D-glutamyl-meso-2,6-diaminopimeloyl-D-alanyl-D-alanine + UDP + H(+). The protein operates within cell wall biogenesis; peptidoglycan biosynthesis. Functionally, cell wall formation. Catalyzes the transfer of a GlcNAc subunit on undecaprenyl-pyrophosphoryl-MurNAc-pentapeptide (lipid intermediate I) to form undecaprenyl-pyrophosphoryl-MurNAc-(pentapeptide)GlcNAc (lipid intermediate II). The polypeptide is UDP-N-acetylglucosamine--N-acetylmuramyl-(pentapeptide) pyrophosphoryl-undecaprenol N-acetylglucosamine transferase (Rickettsia prowazekii (strain Madrid E)).